We begin with the raw amino-acid sequence, 126 residues long: Glycine cleavage system H protein (126 aa).

The Lipoyl-binding domain occupies 24–106; that stretch reads TVTVGITDHA…YGEGWMYRIK (83 aa). Lys-65 carries the post-translational modification N6-lipoyllysine.

This sequence belongs to the GcvH family. The glycine cleavage system is composed of four proteins: P, T, L and H. (R)-lipoate is required as a cofactor.

Its function is as follows. The glycine cleavage system catalyzes the degradation of glycine. The H protein shuttles the methylamine group of glycine from the P protein to the T protein. The chain is Glycine cleavage system H protein from Psychrobacter sp. (strain PRwf-1).